A 511-amino-acid polypeptide reads, in one-letter code: Synaptotagmin-6 (511 aa).

The Vesicular portion of the chain corresponds to 1–59; sequence MSGVWGAGGPRCQAALAVLASLCRARPPPLGLDVETCRSFELQSPEQSPSAADSGTSVS. The interval 12–38 is cysteine motif; sequence CQAALAVLASLCRARPPPLGLDVETCR. A helical membrane pass occupies residues 60–80; it reads LLAVVVIVCGVALVAVFLFLF. The Cytoplasmic segment spans residues 81–511; the sequence is WKLCWMPWRK…KSFKEGTPRL (431 aa). 2 disordered regions span residues 92–119 and 157–182; these read EASSPSSANPASETLQSPSSRGNMADKL and TKLQRQTTEPASSTRHTSFKRHLPRQ. Low complexity predominate over residues 94 to 103; that stretch reads SSPSSANPAS. Composition is skewed to polar residues over residues 104–113 and 160–172; these read ETLQSPSSRG and QRQTTEPASSTRH. S217 is modified (phosphoserine). C2 domains follow at residues 230–351 and 362–495; these read SCGK…SIWK and DLGE…AHWH. Residues D261, D267, D319, F320, D321, S324, D327, D393, D399, D453, and D455 each coordinate Ca(2+). A necessary for cell membrane association (isoform 2) region spans residues 483–511; the sequence is MLAYPRKPIAHWHSLVEVKKSFKEGTPRL.

This sequence belongs to the synaptotagmin family. As to quaternary structure, isoform 1: Homodimer; disulfide-linked via the cysteine motif. Isoform 1: Can also form heterodimers with SYT3, SYT7, SYT9 and SYT10. Isoform 1: Interacts with STX1A, STX1B and STX2; the interaction is Ca(2+)-dependent. Isoform 2: Is not able to form homodimer and heterodimers. Ca(2+) is required as a cofactor. In terms of tissue distribution, isoform 1 is expressed in the olfactory bulb. Isoform 2 is expressed in the brain (at protein level).

The protein localises to the cytoplasmic vesicle. It localises to the secretory vesicle. Its subcellular location is the synaptic vesicle membrane. The protein resides in the membrane. It is found in the cytoplasm. The protein localises to the cytosol. It localises to the cell membrane. In terms of biological role, may be involved in Ca(2+)-dependent exocytosis of secretory vesicles through Ca(2+) and phospholipid binding to the C2 domain or may serve as Ca(2+) sensors in the process of vesicular trafficking and exocytosis. May mediate Ca(2+)-regulation of exocytosis in acrosomal reaction in sperm. The polypeptide is Synaptotagmin-6 (Syt6) (Mus musculus (Mouse)).